A 406-amino-acid chain; its full sequence is Tyrosine--tRNA ligase (406 aa).

Residue Tyr-35 participates in L-tyrosine binding. The 'HIGH' region signature appears at 40-49; it reads PTADSLHVGH. Residues Tyr-168 and Gln-172 each coordinate L-tyrosine. Residues 228–232 carry the 'KMSKS' region motif; sequence KMGKT. Position 231 (Lys-231) interacts with ATP. In terms of domain architecture, S4 RNA-binding spans 340-404; the sequence is STVLDIIAKT…RGKKNYNKIE (65 aa).

The protein belongs to the class-I aminoacyl-tRNA synthetase family. TyrS type 1 subfamily. In terms of assembly, homodimer.

It localises to the cytoplasm. It catalyses the reaction tRNA(Tyr) + L-tyrosine + ATP = L-tyrosyl-tRNA(Tyr) + AMP + diphosphate + H(+). In terms of biological role, catalyzes the attachment of tyrosine to tRNA(Tyr) in a two-step reaction: tyrosine is first activated by ATP to form Tyr-AMP and then transferred to the acceptor end of tRNA(Tyr). This Clostridium botulinum (strain Alaska E43 / Type E3) protein is Tyrosine--tRNA ligase.